Here is a 278-residue protein sequence, read N- to C-terminus: UPF0761 membrane protein NT05HA_1801 (278 aa).

A run of 6 helical transmembrane segments spans residues 32–52 (MLAIVPLIMVVFSIFSAFPVF), 88–108 (QMSAVGIISLIVVALMLINSI), 123–143 (PIFTSFAIYWLILTLGPLLVG), 168–188 (LLSFVPFLSTWFIFTVIYMVV), 203–223 (LIAAVFFTLGKQAFAWYIVTF), and 232–252 (AMATLPIMLLWIQLSWTFVLL).

Belongs to the UPF0761 family.

Its subcellular location is the cell inner membrane. The chain is UPF0761 membrane protein NT05HA_1801 from Aggregatibacter aphrophilus (strain NJ8700) (Haemophilus aphrophilus).